The primary structure comprises 364 residues: UDP-N-acetylglucosamine--N-acetylmuramyl-(pentapeptide) pyrophosphoryl-undecaprenol N-acetylglucosamine transferase (364 aa).

UDP-N-acetyl-alpha-D-glucosamine-binding positions include 10–12, N124, S195, I250, and Q295; that span reads TGG.

This sequence belongs to the glycosyltransferase 28 family. MurG subfamily.

The protein localises to the cell membrane. The catalysed reaction is di-trans,octa-cis-undecaprenyl diphospho-N-acetyl-alpha-D-muramoyl-L-alanyl-D-glutamyl-meso-2,6-diaminopimeloyl-D-alanyl-D-alanine + UDP-N-acetyl-alpha-D-glucosamine = di-trans,octa-cis-undecaprenyl diphospho-[N-acetyl-alpha-D-glucosaminyl-(1-&gt;4)]-N-acetyl-alpha-D-muramoyl-L-alanyl-D-glutamyl-meso-2,6-diaminopimeloyl-D-alanyl-D-alanine + UDP + H(+). It participates in cell wall biogenesis; peptidoglycan biosynthesis. Its function is as follows. Cell wall formation. Catalyzes the transfer of a GlcNAc subunit on undecaprenyl-pyrophosphoryl-MurNAc-pentapeptide (lipid intermediate I) to form undecaprenyl-pyrophosphoryl-MurNAc-(pentapeptide)GlcNAc (lipid intermediate II). The protein is UDP-N-acetylglucosamine--N-acetylmuramyl-(pentapeptide) pyrophosphoryl-undecaprenol N-acetylglucosamine transferase of Bacillus cytotoxicus (strain DSM 22905 / CIP 110041 / 391-98 / NVH 391-98).